A 550-amino-acid polypeptide reads, in one-letter code: (S)-beta-bisabolene synthase (550 aa).

Residues aspartate 303, aspartate 307, serine 451, and glutamate 455 each contribute to the Mg(2+) site. The DDXXD motif motif lies at 303 to 307 (DDTYD).

It belongs to the terpene synthase family. Tpsa subfamily. The cofactor is Mg(2+). Mn(2+) is required as a cofactor. In terms of tissue distribution, expressed only in young rhizomes. Not detected in leaves, roots and mature rhizomes.

The catalysed reaction is (2E,6E)-farnesyl diphosphate = (S)-beta-bisabolene + diphosphate. Functionally, sesquiterpene synthase involved in the biosynthesis of bisabolene. This Zingiber officinale (Ginger) protein is (S)-beta-bisabolene synthase (TPS1).